Reading from the N-terminus, the 211-residue chain is Protein-L-isoaspartate O-methyltransferase (211 aa).

The active site involves Ser62.

The protein belongs to the methyltransferase superfamily. L-isoaspartyl/D-aspartyl protein methyltransferase family.

The protein localises to the cytoplasm. The catalysed reaction is [protein]-L-isoaspartate + S-adenosyl-L-methionine = [protein]-L-isoaspartate alpha-methyl ester + S-adenosyl-L-homocysteine. Catalyzes the methyl esterification of L-isoaspartyl residues in peptides and proteins that result from spontaneous decomposition of normal L-aspartyl and L-asparaginyl residues. It plays a role in the repair and/or degradation of damaged proteins. The protein is Protein-L-isoaspartate O-methyltransferase of Shewanella pealeana (strain ATCC 700345 / ANG-SQ1).